Reading from the N-terminus, the 494-residue chain is Catalase (494 aa).

Residues histidine 65 and asparagine 138 contribute to the active site. Tyrosine 348 serves as a coordination point for heme.

It belongs to the catalase family. As to quaternary structure, homotetramer. Requires heme as cofactor.

It is found in the cytoplasm. The protein localises to the cytosol. The protein resides in the peroxisome matrix. It catalyses the reaction 2 H2O2 = O2 + 2 H2O. Its function is as follows. Catalyzes the degradation of hydrogen peroxide (H(2)O(2)) generated by peroxisomal oxidases to water and oxygen, thereby protecting cells from the toxic effects of hydrogen peroxide. The protein is Catalase of Pisum sativum (Garden pea).